We begin with the raw amino-acid sequence, 158 residues long: Transcription elongation factor GreA (158 aa).

The protein belongs to the GreA/GreB family.

Functionally, necessary for efficient RNA polymerase transcription elongation past template-encoded arresting sites. The arresting sites in DNA have the property of trapping a certain fraction of elongating RNA polymerases that pass through, resulting in locked ternary complexes. Cleavage of the nascent transcript by cleavage factors such as GreA or GreB allows the resumption of elongation from the new 3'terminus. GreA releases sequences of 2 to 3 nucleotides. The chain is Transcription elongation factor GreA from Pseudomonas syringae pv. tomato (strain ATCC BAA-871 / DC3000).